The sequence spans 131 residues: Small ribosomal subunit protein uS8 (131 aa).

Belongs to the universal ribosomal protein uS8 family. Part of the 30S ribosomal subunit. Contacts proteins S5 and S12.

One of the primary rRNA binding proteins, it binds directly to 16S rRNA central domain where it helps coordinate assembly of the platform of the 30S subunit. This Acidithiobacillus ferrooxidans (strain ATCC 23270 / DSM 14882 / CIP 104768 / NCIMB 8455) (Ferrobacillus ferrooxidans (strain ATCC 23270)) protein is Small ribosomal subunit protein uS8.